We begin with the raw amino-acid sequence, 101 residues long: NADH-quinone oxidoreductase subunit K (101 aa).

Transmembrane regions (helical) follow at residues 2-22 (ISLN…LVGV), 29-49 (IMLF…LVAI), and 63-83 (MFII…LILW).

This sequence belongs to the complex I subunit 4L family. In terms of assembly, NDH-1 is composed of 14 different subunits. Subunits NuoA, H, J, K, L, M, N constitute the membrane sector of the complex.

It is found in the cell inner membrane. It catalyses the reaction a quinone + NADH + 5 H(+)(in) = a quinol + NAD(+) + 4 H(+)(out). Functionally, NDH-1 shuttles electrons from NADH, via FMN and iron-sulfur (Fe-S) centers, to quinones in the respiratory chain. The immediate electron acceptor for the enzyme in this species is believed to be ubiquinone. Couples the redox reaction to proton translocation (for every two electrons transferred, four hydrogen ions are translocated across the cytoplasmic membrane), and thus conserves the redox energy in a proton gradient. This chain is NADH-quinone oxidoreductase subunit K, found in Campylobacter hominis (strain ATCC BAA-381 / DSM 21671 / CCUG 45161 / LMG 19568 / NCTC 13146 / CH001A).